We begin with the raw amino-acid sequence, 148 residues long: UPF0179 protein Mboo_1959 (148 aa).

It belongs to the UPF0179 family.

The sequence is that of UPF0179 protein Mboo_1959 from Methanoregula boonei (strain DSM 21154 / JCM 14090 / 6A8).